The sequence spans 304 residues: Nod factor export ATP-binding protein I (304 aa).

The ABC transporter domain occupies 6–236 (IDFQQVEKRY…EIGCDVIEIY (231 aa)). 38 to 45 (GPNGAGKT) is an ATP binding site.

The protein belongs to the ABC transporter superfamily. Lipooligosaccharide exporter (TC 3.A.1.102) family. In terms of assembly, the complex is composed of two ATP-binding proteins (NodI) and two transmembrane proteins (NodJ).

The protein localises to the cell inner membrane. Its function is as follows. Part of the ABC transporter complex NodIJ involved in the export of the nodulation factors (Nod factors), the bacterial signal molecules that induce symbiosis and subsequent nodulation induction. Nod factors are LCO (lipo-chitin oligosaccharide), a modified beta-1,4-linked N-acetylglucosamine oligosaccharide. This subunit is responsible for energy coupling to the transport system. This Burkholderia pseudomallei (strain 1710b) protein is Nod factor export ATP-binding protein I.